Here is a 290-residue protein sequence, read N- to C-terminus: Ribosomal RNA small subunit methyltransferase A (290 aa).

S-adenosyl-L-methionine is bound by residues asparagine 27, leucine 29, glycine 54, glutamate 75, aspartate 100, and asparagine 125.

This sequence belongs to the class I-like SAM-binding methyltransferase superfamily. rRNA adenine N(6)-methyltransferase family. RsmA subfamily.

It localises to the cytoplasm. It carries out the reaction adenosine(1518)/adenosine(1519) in 16S rRNA + 4 S-adenosyl-L-methionine = N(6)-dimethyladenosine(1518)/N(6)-dimethyladenosine(1519) in 16S rRNA + 4 S-adenosyl-L-homocysteine + 4 H(+). Its function is as follows. Specifically dimethylates two adjacent adenosines (A1518 and A1519) in the loop of a conserved hairpin near the 3'-end of 16S rRNA in the 30S particle. May play a critical role in biogenesis of 30S subunits. This Streptococcus equi subsp. zooepidemicus (strain H70) protein is Ribosomal RNA small subunit methyltransferase A.